The sequence spans 297 residues: Elongation factor Ts (297 aa).

The interval 82–85 is involved in Mg(2+) ion dislocation from EF-Tu; it reads TDFV.

It belongs to the EF-Ts family.

The protein resides in the cytoplasm. Its function is as follows. Associates with the EF-Tu.GDP complex and induces the exchange of GDP to GTP. It remains bound to the aminoacyl-tRNA.EF-Tu.GTP complex up to the GTP hydrolysis stage on the ribosome. This chain is Elongation factor Ts, found in Azoarcus sp. (strain BH72).